We begin with the raw amino-acid sequence, 244 residues long: LexA repressor (244 aa).

The interval 1–24 (MSDSSDTTVDGASDGASDGASGAD) is disordered. Residues 10–24 (DGASDGASDGASGAD) are compositionally biased toward low complexity. A DNA-binding region (H-T-H motif) is located at residues 58-78 (IREIGDAVGLTSTSSVAHQLR). Active-site for autocatalytic cleavage activity residues include Ser-168 and Lys-205.

The protein belongs to the peptidase S24 family. Homodimer.

The enzyme catalyses Hydrolysis of Ala-|-Gly bond in repressor LexA.. In terms of biological role, represses a number of genes involved in the response to DNA damage (SOS response), including recA and lexA. In the presence of single-stranded DNA, RecA interacts with LexA causing an autocatalytic cleavage which disrupts the DNA-binding part of LexA, leading to derepression of the SOS regulon and eventually DNA repair. This chain is LexA repressor, found in Mycobacterium ulcerans (strain Agy99).